The primary structure comprises 130 residues: MPKQVIIPPGTTTPIAPFVPGTLADGVVYVSGTLPFDKQNNVVHIGDPKAQTRHVLETIKSVIETAGGSMADVTFNSIFITDWTNYAAINEVYAEFFPGDKPARFCIQCGLVKPDALVEIASVAHIGAPT.

It belongs to the RutC family.

The catalysed reaction is (Z)-3-aminoacrylate + H2O + H(+) = 3-oxopropanoate + NH4(+). In terms of biological role, involved in pyrimidine catabolism. Catalyzes the deamination of 3-aminoacrylate to malonic semialdehyde, a reaction that can also occur spontaneously. RutC may facilitate the reaction and modulate the metabolic fitness, rather than catalyzing essential functions. In Klebsiella pneumoniae (strain 342), this protein is 3-aminoacrylate deaminase RutC.